A 156-amino-acid chain; its full sequence is 3-hydroxyacyl-[acyl-carrier-protein] dehydratase FabZ (156 aa).

H54 is an active-site residue.

The protein belongs to the thioester dehydratase family. FabZ subfamily.

It localises to the cytoplasm. The catalysed reaction is a (3R)-hydroxyacyl-[ACP] = a (2E)-enoyl-[ACP] + H2O. In terms of biological role, involved in unsaturated fatty acids biosynthesis. Catalyzes the dehydration of short chain beta-hydroxyacyl-ACPs and long chain saturated and unsaturated beta-hydroxyacyl-ACPs. In Koribacter versatilis (strain Ellin345), this protein is 3-hydroxyacyl-[acyl-carrier-protein] dehydratase FabZ.